The chain runs to 161 residues: MRLWFCLSFFVVLCLEHFPGTLADERNNRDYPIRTHLHGPHIPRNNRDYPIRTHLHGHHIPRNVPESEEKTEQFLRDLSEISRLQRRPPGFTPFRGKFHSQSLRDLSEISRLQRRPPGFTPFRGKFHSQSLRDMYEIKGFKSAHGRPRVCPPGEQCPIWVG.

The first 23 residues, 1 to 23, serve as a signal peptide directing secretion; that stretch reads MRLWFCLSFFVVLCLEHFPGTLA. A disulfide bridge connects residues cysteine 150 and cysteine 156. Valine 160 carries the valine amide modification.

Belongs to the bradykinin-related peptide family. Expressed by the skin glands.

The protein localises to the secreted. Its function is as follows. Inhibits ACE with a Ki of 1.6 uM, and targets B2 bradykinin receptor (BDKRB2). Provokes contraction of smooth muscle preparation (ileum). In vivo, induces an early hyperalgesic effects in living rats after intraplantar injection. Functionally, inhibits the bradykinin-induced in vitro relaxation of rat arterial smooth muscle and constriction of intestinal smooth muscle. May target bradykinin receptors (BDKRB). In Bombina orientalis (Oriental fire-bellied toad), this protein is Kininogen-2.